The following is a 359-amino-acid chain: MQLFTSFSLLAVASFASAHGIVTDISSGNDWWTLSNPFRDPYMNPVPDRVGWSFFGAGNGPVPDFTTKDIVCNQFAKPGKLSATIAAGSDLTFYWTVWPESHKGPVLTYLANCNGDCSQVQDPSTLSYFKIDHAGLEDGVWVSDKIIANNNSWTVKIPSDIAPGNYLVRHELLALHSAGQDLGAQFYPVCINFKITGSGNAKPAGVTFPGAYKRTDPGILVNIYNGIKSYIIPGPAPYVEGGSPGNSAEPQPQHTSTAVSTAKTASTSSLTTSVTITSQAPSNTANPPQSITTTTTPKPQSTNINPTSLKTVTTSLRREQLINLCLDDINRQIAAAQPKNGGPVNFSNIEKKREDCYKI.

Positions 1-18 (MQLFTSFSLLAVASFASA) are cleaved as a signal peptide. Residues His-19 and His-102 each coordinate Cu(2+). Disulfide bonds link Cys-72/Cys-190 and Cys-113/Cys-117. N-linked (GlcNAc...) asparagine glycosylation occurs at Asn-150. Residues His-176 and Gln-185 each contribute to the O2 site. Tyr-187 lines the Cu(2+) pocket. The disordered stretch occupies residues 241-310 (GGSPGNSAEP…STNINPTSLK (70 aa)). Residues 245–254 (GNSAEPQPQH) show a composition bias toward polar residues. Residues 255–304 (TSTAVSTAKTASTSSLTTSVTITSQAPSNTANPPQSITTTTTPKPQSTNI) show a composition bias toward low complexity. A glycan (N-linked (GlcNAc...) asparagine) is linked at Asn-345.

This sequence belongs to the polysaccharide monooxygenase AA9 family. Cu(2+) is required as a cofactor.

Its subcellular location is the secreted. The catalysed reaction is [(1-&gt;4)-beta-D-glucosyl]n+m + reduced acceptor + O2 = 4-dehydro-beta-D-glucosyl-[(1-&gt;4)-beta-D-glucosyl]n-1 + [(1-&gt;4)-beta-D-glucosyl]m + acceptor + H2O.. Lytic polysaccharide monooxygenase (LPMO) that depolymerizes crystalline and amorphous polysaccharides via the oxidation of scissile alpha- or beta-(1-4)-glycosidic bonds, yielding C1 and C4 oxidation products. Catalysis by LPMOs requires the reduction of the active-site copper from Cu(II) to Cu(I) by a reducing agent and H(2)O(2) or O(2) as a cosubstrate. Active on cellulose and on xyloglucan for deconstruction of plant biomass. The polypeptide is AA9 family lytic polysaccharide monooxygenase B (Geotrichum candidum (Oospora lactis)).